The sequence spans 180 residues: Large ribosomal subunit protein uL6 (180 aa).

This sequence belongs to the universal ribosomal protein uL6 family. Part of the 50S ribosomal subunit.

Functionally, this protein binds to the 23S rRNA, and is important in its secondary structure. It is located near the subunit interface in the base of the L7/L12 stalk, and near the tRNA binding site of the peptidyltransferase center. In Bdellovibrio bacteriovorus (strain ATCC 15356 / DSM 50701 / NCIMB 9529 / HD100), this protein is Large ribosomal subunit protein uL6.